The chain runs to 175 residues: Large ribosomal subunit protein uL10 (175 aa).

It belongs to the universal ribosomal protein uL10 family. As to quaternary structure, part of the ribosomal stalk of the 50S ribosomal subunit. The N-terminus interacts with L11 and the large rRNA to form the base of the stalk. The C-terminus forms an elongated spine to which L12 dimers bind in a sequential fashion forming a multimeric L10(L12)X complex.

Forms part of the ribosomal stalk, playing a central role in the interaction of the ribosome with GTP-bound translation factors. This chain is Large ribosomal subunit protein uL10, found in Synechococcus sp. (strain WH7803).